Reading from the N-terminus, the 74-residue chain is Large ribosomal subunit protein bL31 (74 aa).

Belongs to the bacterial ribosomal protein bL31 family. Type A subfamily. Part of the 50S ribosomal subunit.

Its function is as follows. Binds the 23S rRNA. The chain is Large ribosomal subunit protein bL31 from Chlorobaculum parvum (strain DSM 263 / NCIMB 8327) (Chlorobium vibrioforme subsp. thiosulfatophilum).